The primary structure comprises 60 residues: Large ribosomal subunit protein bL32 (60 aa).

The span at 1–23 shows a compositional bias: basic residues; it reads MAKHPVPKKKTSKSKRDMRRSHH. Residues 1-34 are disordered; the sequence is MAKHPVPKKKTSKSKRDMRRSHHALTAPNLTECP. Positions 33, 36, 46, and 49 each coordinate Zn(2+). The segment at 33–49 adopts a C4-type zinc-finger fold; the sequence is CPQCHGKKLSHHICPNC.

Belongs to the bacterial ribosomal protein bL32 family. In terms of assembly, part of the 50S ribosomal subunit. Contacts proteins L17 and L22. It depends on Zn(2+) as a cofactor.

Its function is as follows. Forms a cluster with L17 and L22, and with L22, a pair of 'tweezers' that hold together all the domains of the 23S rRNA. Interacts with the antibiotic troleandomycin which blocks the peptide exit tunnel. In Deinococcus radiodurans (strain ATCC 13939 / DSM 20539 / JCM 16871 / CCUG 27074 / LMG 4051 / NBRC 15346 / NCIMB 9279 / VKM B-1422 / R1), this protein is Large ribosomal subunit protein bL32 (rpmF).